A 427-amino-acid polypeptide reads, in one-letter code: Trigger factor (427 aa).

A PPIase FKBP-type domain is found at Gly163–Pro248.

This sequence belongs to the FKBP-type PPIase family. Tig subfamily.

The protein resides in the cytoplasm. The enzyme catalyses [protein]-peptidylproline (omega=180) = [protein]-peptidylproline (omega=0). Its function is as follows. Involved in protein export. Acts as a chaperone by maintaining the newly synthesized protein in an open conformation. Functions as a peptidyl-prolyl cis-trans isomerase. The chain is Trigger factor from Bacillus cytotoxicus (strain DSM 22905 / CIP 110041 / 391-98 / NVH 391-98).